Consider the following 189-residue polypeptide: UPF0301 protein CAB604 (189 aa).

This sequence belongs to the UPF0301 (AlgH) family.

The sequence is that of UPF0301 protein CAB604 from Chlamydia abortus (strain DSM 27085 / S26/3) (Chlamydophila abortus).